The sequence spans 435 residues: Glucoside xylosyltransferase 1 (435 aa).

Topologically, residues 1–6 are cytoplasmic; that stretch reads MRRYLR. Residues 7–29 form a helical; Signal-anchor for type II membrane protein membrane-spanning segment; the sequence is VVGLCLACGFCSLLYAFSQLAVS. Residues 30 to 435 are Lumenal-facing; that stretch reads LEEGAAVGRR…NRYDTPPKER (406 aa). Asn-168 and Asn-232 each carry an N-linked (GlcNAc...) asparagine glycan.

It belongs to the glycosyltransferase 8 family.

Its subcellular location is the membrane. It carries out the reaction 3-O-(beta-D-glucosyl)-L-seryl-[EGF-like domain protein] + UDP-alpha-D-xylose = 3-O-[alpha-D-xylosyl-(1-&gt;3)-beta-D-glucosyl]-L-seryl-[EGF-like domain protein] + UDP + H(+). Functionally, glycosyltransferase which elongates the O-linked glucose attached to EGF-like repeats in the extracellular domain of Notch proteins by catalyzing the addition of xylose. In Rattus norvegicus (Rat), this protein is Glucoside xylosyltransferase 1 (Gxylt1).